The following is a 233-amino-acid chain: 7-cyano-7-deazaguanine synthase (233 aa).

7–17 (LSGGLDSAVTS) provides a ligand contact to ATP. Zn(2+) contacts are provided by Cys-195, Cys-206, Cys-209, and Cys-212.

Belongs to the QueC family. Zn(2+) is required as a cofactor.

It carries out the reaction 7-carboxy-7-deazaguanine + NH4(+) + ATP = 7-cyano-7-deazaguanine + ADP + phosphate + H2O + H(+). It participates in purine metabolism; 7-cyano-7-deazaguanine biosynthesis. In terms of biological role, catalyzes the ATP-dependent conversion of 7-carboxy-7-deazaguanine (CDG) to 7-cyano-7-deazaguanine (preQ(0)). This is 7-cyano-7-deazaguanine synthase from Methanococcus maripaludis (strain C6 / ATCC BAA-1332).